Consider the following 108-residue polypeptide: uncharacterized protein (108 aa).

3 helical membrane-spanning segments follow: residues 24 to 44, 55 to 75, and 88 to 108; these read LWITLVLTLFFTIVEIVGGLL, AHMASDVLALGLSMIALYLAM, and RFEIITSFLNGLTLAIISIGI.

The protein to cation A.eutrophus efflux system protein CzcD.

The protein localises to the cell membrane. This is an uncharacterized protein from Geobacillus stearothermophilus (Bacillus stearothermophilus).